The primary structure comprises 539 residues: CTP synthase (539 aa).

Positions 1 to 269 (MSATKYIFVT…DERVLSKLKL (269 aa)) are amidoligase domain. S15 is a CTP binding site. S15 serves as a coordination point for UTP. 16 to 21 (SLGKGI) provides a ligand contact to ATP. L-glutamine is bound at residue Y56. Residue D73 participates in ATP binding. D73 and E143 together coordinate Mg(2+). Residues 150–152 (DIE), 190–195 (KTKPTQ), and K226 each bind CTP. UTP-binding positions include 190 to 195 (KTKPTQ) and K226. The Glutamine amidotransferase type-1 domain maps to 295–537 (NIALVGKYVE…VKAANDFAKG (243 aa)). G357 provides a ligand contact to L-glutamine. C384 functions as the Nucleophile; for glutamine hydrolysis in the catalytic mechanism. L-glutamine contacts are provided by residues 385–388 (LGMQ), E408, and R465. Active-site residues include H510 and E512.

The protein belongs to the CTP synthase family. Homotetramer.

It carries out the reaction UTP + L-glutamine + ATP + H2O = CTP + L-glutamate + ADP + phosphate + 2 H(+). It catalyses the reaction L-glutamine + H2O = L-glutamate + NH4(+). The catalysed reaction is UTP + NH4(+) + ATP = CTP + ADP + phosphate + 2 H(+). Its pathway is pyrimidine metabolism; CTP biosynthesis via de novo pathway; CTP from UDP: step 2/2. With respect to regulation, allosterically activated by GTP, when glutamine is the substrate; GTP has no effect on the reaction when ammonia is the substrate. The allosteric effector GTP functions by stabilizing the protein conformation that binds the tetrahedral intermediate(s) formed during glutamine hydrolysis. Inhibited by the product CTP, via allosteric rather than competitive inhibition. In terms of biological role, catalyzes the ATP-dependent amination of UTP to CTP with either L-glutamine or ammonia as the source of nitrogen. Regulates intracellular CTP levels through interactions with the four ribonucleotide triphosphates. The polypeptide is CTP synthase (Cytophaga hutchinsonii (strain ATCC 33406 / DSM 1761 / CIP 103989 / NBRC 15051 / NCIMB 9469 / D465)).